The primary structure comprises 158 residues: Peroxidase (158 aa).

P2 lines the substrate pocket. A heme b-binding site is contributed by H32. A Ca(2+)-binding site is contributed by T33. An intrachain disulfide couples C39 to C64. A glycan (N-linked (GlcNAc...) asparagine) is linked at N48. Ca(2+) is bound by residues D78, T81, and D86.

It belongs to the peroxidase family. Classical plant (class III) peroxidase subfamily. It depends on Ca(2+) as a cofactor. Heme b is required as a cofactor.

It carries out the reaction 2 a phenolic donor + H2O2 = 2 a phenolic radical donor + 2 H2O. In terms of biological role, removal of H(2)O(2), oxidation of toxic reductants, biosynthesis and degradation of lignin, suberization, auxin catabolism, response to environmental stresses such as wounding, pathogen attack and oxidative stress. These functions might be dependent on each isozyme/isoform in each plant tissue. The polypeptide is Peroxidase (Lupinus polyphyllus (Large-leaved lupine)).